The chain runs to 313 residues: tRNA dimethylallyltransferase 2 (313 aa).

16–23 (GPTASGKT) contacts ATP. 18–23 (TASGKT) provides a ligand contact to substrate. 2 interaction with substrate tRNA regions span residues 41 to 44 (DSRQ) and 161 to 165 (QRTIR).

It belongs to the IPP transferase family. As to quaternary structure, monomer. Mg(2+) is required as a cofactor.

The enzyme catalyses adenosine(37) in tRNA + dimethylallyl diphosphate = N(6)-dimethylallyladenosine(37) in tRNA + diphosphate. Its function is as follows. Catalyzes the transfer of a dimethylallyl group onto the adenine at position 37 in tRNAs that read codons beginning with uridine, leading to the formation of N6-(dimethylallyl)adenosine (i(6)A). The protein is tRNA dimethylallyltransferase 2 of Pelobacter propionicus (strain DSM 2379 / NBRC 103807 / OttBd1).